The primary structure comprises 676 residues: UvrABC system protein B (676 aa).

The Helicase ATP-binding domain maps to 35-192; sequence QGVADGLMYQ…ARLVAMQYTR (158 aa). 48-55 is a binding site for ATP; the sequence is GVTGSGKT. Positions 101–124 match the Beta-hairpin motif; sequence YYDYYQPEAYVPTRDLFIEKDSSV. Residues 439–605 enclose the Helicase C-terminal domain; the sequence is QVDDLLGEIR…GVNKAVRELI (167 aa). One can recognise a UVR domain in the interval 634–669; sequence AREIKRLEKLMMDHARNLEFEQAAAARDALTALKNR.

This sequence belongs to the UvrB family. As to quaternary structure, forms a heterotetramer with UvrA during the search for lesions. Interacts with UvrC in an incision complex.

Its subcellular location is the cytoplasm. The UvrABC repair system catalyzes the recognition and processing of DNA lesions. A damage recognition complex composed of 2 UvrA and 2 UvrB subunits scans DNA for abnormalities. Upon binding of the UvrA(2)B(2) complex to a putative damaged site, the DNA wraps around one UvrB monomer. DNA wrap is dependent on ATP binding by UvrB and probably causes local melting of the DNA helix, facilitating insertion of UvrB beta-hairpin between the DNA strands. Then UvrB probes one DNA strand for the presence of a lesion. If a lesion is found the UvrA subunits dissociate and the UvrB-DNA preincision complex is formed. This complex is subsequently bound by UvrC and the second UvrB is released. If no lesion is found, the DNA wraps around the other UvrB subunit that will check the other stand for damage. This is UvrABC system protein B from Bordetella avium (strain 197N).